The following is a 121-amino-acid chain: Large ribosomal subunit protein uL22 (121 aa).

Belongs to the universal ribosomal protein uL22 family. In terms of assembly, part of the 50S ribosomal subunit.

Functionally, this protein binds specifically to 23S rRNA; its binding is stimulated by other ribosomal proteins, e.g. L4, L17, and L20. It is important during the early stages of 50S assembly. It makes multiple contacts with different domains of the 23S rRNA in the assembled 50S subunit and ribosome. The globular domain of the protein is located near the polypeptide exit tunnel on the outside of the subunit, while an extended beta-hairpin is found that lines the wall of the exit tunnel in the center of the 70S ribosome. In Arthrobacter sp. (strain FB24), this protein is Large ribosomal subunit protein uL22.